The primary structure comprises 206 residues: Ribosomal RNA large subunit methyltransferase E (206 aa).

S-adenosyl-L-methionine contacts are provided by Gly61, Trp63, Asp81, Asp97, and Asp122. The Proton acceptor role is filled by Lys162.

The protein belongs to the class I-like SAM-binding methyltransferase superfamily. RNA methyltransferase RlmE family.

It is found in the cytoplasm. It catalyses the reaction uridine(2552) in 23S rRNA + S-adenosyl-L-methionine = 2'-O-methyluridine(2552) in 23S rRNA + S-adenosyl-L-homocysteine + H(+). Its function is as follows. Specifically methylates the uridine in position 2552 of 23S rRNA at the 2'-O position of the ribose in the fully assembled 50S ribosomal subunit. This Neisseria gonorrhoeae (strain NCCP11945) protein is Ribosomal RNA large subunit methyltransferase E.